We begin with the raw amino-acid sequence, 140 residues long: Hemoglobin subunit beta (140 aa).

Residues 1–140 (GSDLVSGFWG…VGDALAKAYH (140 aa)) form the Globin domain. Heme b-binding residues include histidine 57 and histidine 86.

It belongs to the globin family. As to quaternary structure, heterotetramer of two alpha chains and two beta chains. In terms of tissue distribution, red blood cells.

Functionally, involved in oxygen transport from the lung to the various peripheral tissues. The chain is Hemoglobin subunit beta (HBB) from Pelophylax lessonae (Pool frog).